Consider the following 372-residue polypeptide: Saccharopine dehydrogenase [NAD(+), L-lysine-forming] (372 aa).

The L-saccharopine site is built by R18 and K77. Residue K77 is the Proton acceptor of the active site. Catalysis depends on H95, which acts as the Proton donor. Q100 serves as a coordination point for L-saccharopine. R129 contacts NAD(+). Residues R130 and F134 each contribute to the L-saccharopine site. NAD(+)-binding positions include 200-201, D224, T228, Y248, and V275; that span reads GR. A disulfide bond links C202 and C246. An L-saccharopine-binding site is contributed by 276–278; that stretch reads SAD. Residue 316-319 participates in NAD(+) binding; sequence IDHL.

It belongs to the AlaDH/PNT family. In terms of assembly, monomer.

The enzyme catalyses L-saccharopine + NAD(+) + H2O = L-lysine + 2-oxoglutarate + NADH + H(+). Its pathway is amino-acid biosynthesis; L-lysine biosynthesis via AAA pathway; L-lysine from L-alpha-aminoadipate (fungal route): step 3/3. Functionally, catalyzes the NAD(+)-dependent cleavage of saccharopine to L-lysine and 2-oxoglutarate, the final step in the alpha-aminoadipate (AAA) pathway for lysin biosynthesis. The polypeptide is Saccharopine dehydrogenase [NAD(+), L-lysine-forming] (lys-4) (Neurospora crassa (strain ATCC 24698 / 74-OR23-1A / CBS 708.71 / DSM 1257 / FGSC 987)).